Reading from the N-terminus, the 99-residue chain is Large ribosomal subunit protein uL23 (99 aa).

This sequence belongs to the universal ribosomal protein uL23 family. In terms of assembly, part of the 50S ribosomal subunit. Contacts protein L29, and trigger factor when it is bound to the ribosome.

Functionally, one of the early assembly proteins it binds 23S rRNA. One of the proteins that surrounds the polypeptide exit tunnel on the outside of the ribosome. Forms the main docking site for trigger factor binding to the ribosome. This chain is Large ribosomal subunit protein uL23, found in Lachnoclostridium phytofermentans (strain ATCC 700394 / DSM 18823 / ISDg) (Clostridium phytofermentans).